We begin with the raw amino-acid sequence, 1408 residues long: TSET complex member tstA (1408 aa).

Disordered regions lie at residues 259–347, 998–1055, and 1091–1139; these read FWPT…SIIA, QQSS…AVGS, and SSSS…TNLN. Over residues 266-308 the composition is skewed to low complexity; it reads NNNNNNNNQQINNNNNNNNNNNNNNNNNNNNNNNNNNNNNQNN. The span at 309-318 shows a compositional bias: polar residues; the sequence is LINGISSMNL. Low complexity-rich tracts occupy residues 319 to 347 and 998 to 1051; these read SSITGTTTTTTTTGNSPITSPTSPTSIIA and QQSS…ISTS.

This sequence belongs to the TPLATE family. In terms of assembly, component of the TSET complex, a heterohexamer composed of tstA, tstB, tstC, tstD, tstE and tstF, which may act in plasma membrane turnover. tstA, tstB, tstC and tstD are likely to be the core complex members with tstE and tstF acting as associated scaffold proteins.

This is TSET complex member tstA from Dictyostelium discoideum (Social amoeba).